Consider the following 651-residue polypeptide: Protein transport protein SEC9 (651 aa).

Disordered regions lie at residues 1–22 (MGLKKFFKIKPPEEATPEQNKD), 53–299 (AEDK…QAPM), and 313–332 (RNSEVDLNEEPRTGEFDFEE). Residues serine 79 and serine 92 each carry the phosphoserine modification. Residues 86 to 112 (NEATAGSNRGSSGTQDLGNGAESNSMQ) are compositionally biased toward polar residues. A compositionally biased stretch (basic and acidic residues) spans 120-129 (DDYRYDDDPY). Composition is skewed to polar residues over residues 157–218 (GTSL…SLDQ) and 244–284 (DSNT…ANPY). Phosphoserine occurs at positions 186, 190, 213, 271, and 273. The span at 285–296 (SSRSVRQPQSQQ) shows a compositional bias: low complexity. Basic and acidic residues predominate over residues 313-327 (RNSEVDLNEEPRTGE). A Phosphoserine modification is found at serine 315. Threonine 355 carries the post-translational modification Phosphothreonine. A Phosphoserine modification is found at serine 359. 2 t-SNARE coiled-coil homology domains span residues 434-496 (KFTK…VAEL) and 588-650 (DEME…LAGI).

The protein belongs to the SNAP-25 family. Interacts with SRO7 and SRO77.

In terms of biological role, component of a SNARE complex that may be the effector of SEC4 function in exocytosis. In Saccharomyces cerevisiae (strain ATCC 204508 / S288c) (Baker's yeast), this protein is Protein transport protein SEC9 (SEC9).